We begin with the raw amino-acid sequence, 200 residues long: dITP/XTP pyrophosphatase (200 aa).

7 to 12 (SNNRGK) is a substrate binding site. Asp-68 (proton acceptor) is an active-site residue. Mg(2+) is bound at residue Asp-68. Substrate contacts are provided by residues Ala-69, 154-157 (FGFD), Lys-177, and 182-183 (HR).

The protein belongs to the HAM1 NTPase family. Homodimer. Mg(2+) serves as cofactor.

It catalyses the reaction XTP + H2O = XMP + diphosphate + H(+). The catalysed reaction is dITP + H2O = dIMP + diphosphate + H(+). It carries out the reaction ITP + H2O = IMP + diphosphate + H(+). Its function is as follows. Pyrophosphatase that catalyzes the hydrolysis of nucleoside triphosphates to their monophosphate derivatives, with a high preference for the non-canonical purine nucleotides XTP (xanthosine triphosphate), dITP (deoxyinosine triphosphate) and ITP. Seems to function as a house-cleaning enzyme that removes non-canonical purine nucleotides from the nucleotide pool, thus preventing their incorporation into DNA/RNA and avoiding chromosomal lesions. The chain is dITP/XTP pyrophosphatase from Delftia acidovorans (strain DSM 14801 / SPH-1).